The primary structure comprises 407 residues: Proteasome-activating nucleotidase (407 aa).

Residues 22–67 (KEKAYLAELESKVLRLELKNKDITRENVQIKKENEILKRELDKLRI) are a coiled coil. ATP is bound by residues 192–197 (GTGKTL) and His-331. Positions 405 to 407 (MYG) are docks into pockets in the proteasome alpha-ring to cause gate opening.

It belongs to the AAA ATPase family. In terms of assembly, homohexamer. The hexameric complex has a two-ring architecture resembling a top hat that caps the 20S proteasome core at one or both ends. Upon ATP-binding, the C-terminus of PAN interacts with the alpha-rings of the proteasome core by binding to the intersubunit pockets.

It localises to the cytoplasm. In terms of biological role, ATPase which is responsible for recognizing, binding, unfolding and translocation of substrate proteins into the archaeal 20S proteasome core particle. Is essential for opening the gate of the 20S proteasome via an interaction with its C-terminus, thereby allowing substrate entry and access to the site of proteolysis. Thus, the C-termini of the proteasomal ATPase function like a 'key in a lock' to induce gate opening and therefore regulate proteolysis. Unfolding activity requires energy from ATP hydrolysis, whereas ATP binding alone promotes ATPase-20S proteasome association which triggers gate opening, and supports translocation of unfolded substrates. This Methanococcus vannielii (strain ATCC 35089 / DSM 1224 / JCM 13029 / OCM 148 / SB) protein is Proteasome-activating nucleotidase.